Reading from the N-terminus, the 187-residue chain is Probable chorismate pyruvate-lyase (187 aa).

Substrate is bound by residues Arg76, Leu114, and Glu173.

Belongs to the UbiC family.

It localises to the cytoplasm. The catalysed reaction is chorismate = 4-hydroxybenzoate + pyruvate. It participates in cofactor biosynthesis; ubiquinone biosynthesis. Its function is as follows. Removes the pyruvyl group from chorismate, with concomitant aromatization of the ring, to provide 4-hydroxybenzoate (4HB) for the ubiquinone pathway. This chain is Probable chorismate pyruvate-lyase, found in Shewanella amazonensis (strain ATCC BAA-1098 / SB2B).